Consider the following 569-residue polypeptide: WD repeat-containing protein 20 (569 aa).

An N-acetylalanine modification is found at Ala-2. WD repeat units lie at residues Arg-94 to Ser-138, Lys-139 to Arg-210, Asn-211 to Val-252, Glu-253 to Asp-331, Glu-332 to Pro-426, Pro-427 to Leu-523, and Glu-524 to Gly-559. 2 positions are modified to phosphoserine: Ser-357 and Ser-360. Polar residues-rich tracts occupy residues Asn-405–Asn-423 and Arg-431–Ser-445. The segment at Asn-405 to Ser-445 is disordered. 3 positions are modified to phosphoserine: Ser-432, Ser-434, and Ser-465. The tract at residues Met-450–Asp-468 is mediates XPO1-dependent nuclear export of WDR20-USP12 complexes.

In terms of assembly, interacts with USP12; promotes translocation of USP12/WDR20 to the plasma membrane. Component of the USP12/WDR20/WDR48 deubiquitinating complex. Interacts with USP46; contributes to the cytoplasmic localization of the USP46/WDR20 complex. Component of the USP12/DMWD/WDR48 deubiquitinating complex.

It is found in the cytoplasm. Its subcellular location is the nucleus. Functionally, regulator of deubiquitinating complexes. Activates deubiquitinating activity of complexes containing USP12. Anchors at the base of the ubiquitin-contacting loop of USP12 and remotely modulates the catalytic center of the enzyme. Regulates shuttling of the USP12 deubiquitinase complex between the plasma membrane, cytoplasm and nucleus. In Homo sapiens (Human), this protein is WD repeat-containing protein 20 (WDR20).